The following is a 323-amino-acid chain: Aldo-keto reductase family 1 member C1 (323 aa).

NADP(+)-binding positions include 20 to 24 and Asp-50; that span reads GFGTY. Tyr-24 is a binding site for substrate. The active-site Proton donor is the Tyr-55. His-117 serves as a coordination point for substrate. NADP(+)-binding positions include 166-167, Gln-190, and 216-222; these read SN and YSALGSH. Residues His-222 and Trp-227 each contribute to the substrate site. Residue 270–280 coordinates NADP(+); that stretch reads KSYNEQRIRQN.

The protein belongs to the aldo/keto reductase family. As to quaternary structure, monomer. Expressed in all tissues tested including liver, prostate, testis, adrenal gland, brain, uterus, mammary gland and keratinocytes. Highest levels found in liver, mammary gland and brain.

Its subcellular location is the cytoplasm. It localises to the cytosol. The enzyme catalyses a 3alpha-hydroxysteroid + NADP(+) = a 3-oxosteroid + NADPH + H(+). The catalysed reaction is a 3alpha-hydroxysteroid + NAD(+) = a 3-oxosteroid + NADH + H(+). It carries out the reaction (17R,20S)-17,20-dihydroxypregn-4-en-3-one + NADP(+) = 17alpha-hydroxyprogesterone + NADPH + H(+). It catalyses the reaction (17R,20S)-17,20-dihydroxypregn-4-en-3-one + NAD(+) = 17alpha-hydroxyprogesterone + NADH + H(+). The enzyme catalyses (20S)-hydroxypregn-4-en-3-one + NADP(+) = progesterone + NADPH + H(+). The catalysed reaction is (20S)-hydroxypregn-4-en-3-one + NAD(+) = progesterone + NADH + H(+). It carries out the reaction (1R,2R)-1,2-dihydrobenzene-1,2-diol + NADP(+) = catechol + NADPH + H(+). It catalyses the reaction (S)-indan-1-ol + NAD(+) = indan-1-one + NADH + H(+). The enzyme catalyses (S)-indan-1-ol + NADP(+) = indan-1-one + NADPH + H(+). The catalysed reaction is 5alpha-androstane-3alpha,17beta-diol + NADP(+) = 17beta-hydroxy-5alpha-androstan-3-one + NADPH + H(+). It carries out the reaction 5alpha-androstane-3beta,17beta-diol + NADP(+) = 17beta-hydroxy-5alpha-androstan-3-one + NADPH + H(+). It catalyses the reaction 5alpha-androstane-3alpha,17beta-diol + NAD(+) = 17beta-hydroxy-5alpha-androstan-3-one + NADH + H(+). The enzyme catalyses 17beta-hydroxy-5alpha-androstan-3-one + NADP(+) = 5alpha-androstan-3,17-dione + NADPH + H(+). The catalysed reaction is androsterone + NADP(+) = 5alpha-androstan-3,17-dione + NADPH + H(+). It carries out the reaction androsterone + NADPH + H(+) = 5alpha-androstane-3alpha,17beta-diol + NADP(+). It catalyses the reaction 5alpha-androstane-3alpha,17beta-diol + NAD(+) = androsterone + NADH + H(+). The enzyme catalyses 17beta-estradiol + NADP(+) = estrone + NADPH + H(+). The catalysed reaction is 17beta-estradiol + NAD(+) = estrone + NADH + H(+). It carries out the reaction testosterone + NADP(+) = androst-4-ene-3,17-dione + NADPH + H(+). It catalyses the reaction 20alpha-hydroxy-5beta-pregnan-3-one + NADP(+) = 5beta-pregnan-3,20-dione + NADPH + H(+). The enzyme catalyses 3beta-hydroxy-5beta-pregnane-20-one + NADP(+) = 5beta-pregnan-3,20-dione + NADPH + H(+). The catalysed reaction is 3beta-hydroxy-5beta-pregnane-20-one + NADPH + H(+) = 3beta,20alpha-dihydroxy-5beta-pregnane + NADP(+). It carries out the reaction (3beta,5alpha,17beta)-3-hydroxyandrostan-17-yl sulfate + NADP(+) = 5alpha-dihydrotestosterone sulfate + NADPH + H(+). It functions in the pathway steroid metabolism. Its activity is regulated as follows. Inhibited by hexestrol with an IC(50) of 9.5 uM, 1,10-phenanthroline with an IC(50) of 55 uM, 1,7-phenanthroline with an IC(50) of 72 uM, flufenamic acid with an IC(50) of 6.0 uM, indomethacin with an IC(50) of 140 uM, ibuprofen with an IC(50) of 950 uM, lithocholic acid with an IC(50) of 25 uM, ursodeoxycholic acid with an IC(50) of 340 uM and chenodeoxycholic acid with an IC(50) of 570 uM. The oxidation reaction is inhibited by low micromolar concentrations of NADPH. Functionally, cytosolic aldo-keto reductase that catalyzes the NADH and NADPH-dependent reduction of ketosteroids to hydroxysteroids. Most probably acts as a reductase in vivo since the oxidase activity measured in vitro is inhibited by physiological concentrations of NADPH. Displays a broad positional specificity acting on positions 3, 17 and 20 of steroids and regulates the metabolism of hormones like estrogens and androgens. May also reduce conjugated steroids such as 5alpha-dihydrotestosterone sulfate. Displays affinity for bile acids. The sequence is that of Aldo-keto reductase family 1 member C1 (AKR1C1) from Homo sapiens (Human).